The sequence spans 197 residues: Thymidine kinase (197 aa).

ATP is bound by residues 9-16 (SAMDAGKT) and 87-90 (DEIH). Glu88 functions as the Proton acceptor in the catalytic mechanism. Cys145, Cys147, Cys187, and His190 together coordinate Zn(2+).

The protein belongs to the thymidine kinase family. As to quaternary structure, homotetramer.

It is found in the cytoplasm. It catalyses the reaction thymidine + ATP = dTMP + ADP + H(+). The chain is Thymidine kinase from Francisella tularensis subsp. tularensis (strain SCHU S4 / Schu 4).